A 316-amino-acid chain; its full sequence is D-alanine--D-alanine ligase (316 aa).

Residues 108 to 310 enclose the ATP-grasp domain; sequence ERYEELSVVK…FDELVDLIIK (203 aa). An ATP-binding site is contributed by 138–193; sequence EEKIGLPCVVKPRKEGSSIGTHICFSKEELLDALKNEFKNYDEMIVQEYIKGKEIT. Asp-265, Glu-277, and Asn-279 together coordinate Mg(2+).

This sequence belongs to the D-alanine--D-alanine ligase family. The cofactor is Mg(2+). Mn(2+) serves as cofactor.

The protein localises to the cytoplasm. The enzyme catalyses 2 D-alanine + ATP = D-alanyl-D-alanine + ADP + phosphate + H(+). Its pathway is cell wall biogenesis; peptidoglycan biosynthesis. Cell wall formation. The protein is D-alanine--D-alanine ligase of Fervidobacterium nodosum (strain ATCC 35602 / DSM 5306 / Rt17-B1).